A 246-amino-acid chain; its full sequence is Large ribosomal subunit protein uL2 (246 aa).

The disordered stretch occupies residues 196 to 226 (MSPYAHPHGGGSHQKGGTPVPKTAPPGQKVG).

The protein belongs to the universal ribosomal protein uL2 family. In terms of assembly, part of the 50S ribosomal subunit. Forms a bridge to the 30S subunit in the 70S ribosome.

Functionally, one of the primary rRNA binding proteins. Required for association of the 30S and 50S subunits to form the 70S ribosome, for tRNA binding and peptide bond formation. It has been suggested to have peptidyltransferase activity; this is somewhat controversial. Makes several contacts with the 16S rRNA in the 70S ribosome. The sequence is that of Large ribosomal subunit protein uL2 from Pyrobaculum arsenaticum (strain DSM 13514 / JCM 11321 / PZ6).